Here is a 381-residue protein sequence, read N- to C-terminus: Methanesulfonate monooxygenase (381 aa).

The protein belongs to the SsuD family.

It catalyses the reaction an alkanesulfonate + FMNH2 + O2 = an aldehyde + FMN + sulfite + H2O + 2 H(+). Catalyzes the desulfonation of aliphatic sulfonates. Shows highest activity with methanesulfonate. The chain is Methanesulfonate monooxygenase (msuD) from Pseudomonas aeruginosa (strain ATCC 15692 / DSM 22644 / CIP 104116 / JCM 14847 / LMG 12228 / 1C / PRS 101 / PAO1).